We begin with the raw amino-acid sequence, 1824 residues long: E3 ubiquitin-protein ligase UBR1 (1824 aa).

The UBR-type zinc finger occupies 107–178 (TVCGKVFKNG…KDQYCELHLA (72 aa)). Disordered regions lie at residues 1006–1043 (KQAP…ENRA) and 1073–1093 (ADTE…DWED). Over residues 1033–1043 (EQAREERENRA) the composition is skewed to basic and acidic residues. Residues 1126 to 1220 (FKCILCFENC…VEFQCPYCRT (95 aa)) form an RING-type; atypical zinc finger.

It belongs to the E3 ubiquitin-protein ligase UBR1-like family.

It carries out the reaction S-ubiquitinyl-[E2 ubiquitin-conjugating enzyme]-L-cysteine + [acceptor protein]-L-lysine = [E2 ubiquitin-conjugating enzyme]-L-cysteine + N(6)-ubiquitinyl-[acceptor protein]-L-lysine.. It functions in the pathway protein modification; protein ubiquitination. In terms of biological role, E3 ubiquitin-protein ligase which is a component of the N-end rule pathway. Recognizes and binds to proteins bearing specific N-terminal residues that are destabilizing according to the N-end rule, leading to their ubiquitination and subsequent degradation. The chain is E3 ubiquitin-protein ligase UBR1 from Drosophila melanogaster (Fruit fly).